Here is a 965-residue protein sequence, read N- to C-terminus: Isoleucine--tRNA ligase (965 aa).

The short motif at 68 to 78 is the 'HIGH' region element; it reads PYANGSLHMGH. Residue Glu-582 participates in L-isoleucyl-5'-AMP binding. Positions 623 to 627 match the 'KMSKS' region motif; the sequence is KMSKS. Lys-626 lines the ATP pocket. 4 residues coordinate Zn(2+): Cys-936, Cys-939, Cys-956, and Cys-959.

The protein belongs to the class-I aminoacyl-tRNA synthetase family. IleS type 1 subfamily. In terms of assembly, monomer. Zn(2+) is required as a cofactor.

It is found in the cytoplasm. It carries out the reaction tRNA(Ile) + L-isoleucine + ATP = L-isoleucyl-tRNA(Ile) + AMP + diphosphate. In terms of biological role, catalyzes the attachment of isoleucine to tRNA(Ile). As IleRS can inadvertently accommodate and process structurally similar amino acids such as valine, to avoid such errors it has two additional distinct tRNA(Ile)-dependent editing activities. One activity is designated as 'pretransfer' editing and involves the hydrolysis of activated Val-AMP. The other activity is designated 'posttransfer' editing and involves deacylation of mischarged Val-tRNA(Ile). This is Isoleucine--tRNA ligase from Prochlorococcus marinus subsp. pastoris (strain CCMP1986 / NIES-2087 / MED4).